We begin with the raw amino-acid sequence, 606 residues long: Putative auxin response factor 21 (606 aa).

Positions 126-228 (FTKVLTASDT…ELRVGIRRAR (103 aa)) form a DNA-binding region, TF-B3. The PB1 domain occupies 511–592 (RTCTKVQMQG…MVKKILIYSK (82 aa)).

This sequence belongs to the ARF family. Homodimers and heterodimers.

It is found in the nucleus. Its function is as follows. Auxin response factors (ARFs) are transcriptional factors that bind specifically to the DNA sequence 5'-TGTCTC-3' found in the auxin-responsive promoter elements (AuxREs). Could act as transcriptional activator or repressor. Formation of heterodimers with Aux/IAA proteins may alter their ability to modulate early auxin response genes expression. The polypeptide is Putative auxin response factor 21 (ARF21) (Arabidopsis thaliana (Mouse-ear cress)).